The following is a 590-amino-acid chain: Negative elongation factor D (590 aa).

The segment at 15 to 43 (YGSAAEWGDEADGGQQEDDSGEGEDDAEV) is disordered. The segment covering 21–43 (WGDEADGGQQEDDSGEGEDDAEV) has biased composition (acidic residues).

Belongs to the NELF-D family. The NELF complex is composed of NELFA, NELFB, NELFCD and NELFE; NELFA and NELFCD form a stable subcomplex that binds primarily through NELFCD to the N-terminus of NELFB. Binds RNA which may help to stabilize the NELF complex on nucleic acid. In vitro, the NELFA:NELFCD subcomplex binds to ssDNA and ssRNA in a sequence- and structure-dependent manner. Interacts with ARAF1. Interacts with PCF11. Interacts with NELFB. Interacts with KAT8.

The protein localises to the nucleus. In terms of biological role, essential component of the NELF complex, a complex that negatively regulates the elongation of transcription by RNA polymerase II. The NELF complex, which acts via an association with the DSIF complex and causes transcriptional pausing, is counteracted by the P-TEFb kinase complex. The sequence is that of Negative elongation factor D (NELFCD) from Pongo abelii (Sumatran orangutan).